Consider the following 921-residue polypeptide: Isoleucine--tRNA ligase (921 aa).

The short motif at 57-67 (PYANGELHMGH) is the 'HIGH' region element. E552 contacts L-isoleucyl-5'-AMP. Residues 593–597 (KMSKS) carry the 'KMSKS' region motif. K596 contributes to the ATP binding site. Zn(2+) contacts are provided by C888, C891, C908, and C911.

This sequence belongs to the class-I aminoacyl-tRNA synthetase family. IleS type 1 subfamily. As to quaternary structure, monomer. The cofactor is Zn(2+).

The protein localises to the cytoplasm. The enzyme catalyses tRNA(Ile) + L-isoleucine + ATP = L-isoleucyl-tRNA(Ile) + AMP + diphosphate. Its function is as follows. Catalyzes the attachment of isoleucine to tRNA(Ile). As IleRS can inadvertently accommodate and process structurally similar amino acids such as valine, to avoid such errors it has two additional distinct tRNA(Ile)-dependent editing activities. One activity is designated as 'pretransfer' editing and involves the hydrolysis of activated Val-AMP. The other activity is designated 'posttransfer' editing and involves deacylation of mischarged Val-tRNA(Ile). The protein is Isoleucine--tRNA ligase of Listeria monocytogenes serotype 4b (strain F2365).